A 726-amino-acid polypeptide reads, in one-letter code: Catalase-peroxidase (726 aa).

Residues 98 to 226 (WHSAGTYRMQ…LAAVHMGLIY (129 aa)) constitute a cross-link (tryptophyl-tyrosyl-methioninium (Trp-Tyr) (with M-252)). Histidine 99 (proton acceptor) is an active-site residue. A cross-link (tryptophyl-tyrosyl-methioninium (Tyr-Met) (with W-98)) is located at residues 226–252 (YVNPEGVNGQPDPARTAQHVRETFARM). Heme b is bound at residue histidine 267.

It belongs to the peroxidase family. Peroxidase/catalase subfamily. As to quaternary structure, homodimer or homotetramer. It depends on heme b as a cofactor. Post-translationally, formation of the three residue Trp-Tyr-Met cross-link is important for the catalase, but not the peroxidase activity of the enzyme.

It carries out the reaction H2O2 + AH2 = A + 2 H2O. It catalyses the reaction 2 H2O2 = O2 + 2 H2O. Its function is as follows. Bifunctional enzyme with both catalase and broad-spectrum peroxidase activity. The polypeptide is Catalase-peroxidase (Roseobacter denitrificans (strain ATCC 33942 / OCh 114) (Erythrobacter sp. (strain OCh 114))).